A 149-amino-acid polypeptide reads, in one-letter code: Arginine repressor (149 aa).

It belongs to the ArgR family.

It is found in the cytoplasm. Its pathway is amino-acid biosynthesis; L-arginine biosynthesis [regulation]. In terms of biological role, regulates arginine biosynthesis genes. The polypeptide is Arginine repressor (Chlorobium phaeobacteroides (strain DSM 266 / SMG 266 / 2430)).